The following is a 409-amino-acid chain: Elongation factor Tu, chloroplastic (409 aa).

The 205-residue stretch at 10 to 214 folds into the tr-type G domain; sequence KPHVNIGTIG…NVDSYIPTPA (205 aa). Residues 19-26 are G1; it reads GHVDHGKT. 19–26 lines the GTP pocket; sequence GHVDHGKT. Thr-26 serves as a coordination point for Mg(2+). Residues 60–64 are G2; sequence GITIN. The tract at residues 81-84 is G3; that stretch reads DCPG. GTP-binding positions include 81 to 85 and 136 to 139; these read DCPGH and NKED. The G4 stretch occupies residues 136-139; that stretch reads NKED. The interval 174-176 is G5; sequence SAL.

Belongs to the TRAFAC class translation factor GTPase superfamily. Classic translation factor GTPase family. EF-Tu/EF-1A subfamily.

It is found in the plastid. Its subcellular location is the chloroplast. The enzyme catalyses GTP + H2O = GDP + phosphate + H(+). Functionally, GTP hydrolase that promotes the GTP-dependent binding of aminoacyl-tRNA to the A-site of ribosomes during protein biosynthesis. In Ostreococcus tauri, this protein is Elongation factor Tu, chloroplastic (tufA).